The chain runs to 516 residues: Cytochrome P450 1A2 (516 aa).

O-linked (GlcNAc) serine glycosylation occurs at serine 69. Position 226 (phenylalanine 226) interacts with substrate. Heme is bound at residue cysteine 458.

The protein belongs to the cytochrome P450 family. In terms of assembly, interacts with PGRMC1; the interaction requires PGRMC1 homodimerization. The cofactor is heme.

It is found in the endoplasmic reticulum membrane. Its subcellular location is the microsome membrane. The catalysed reaction is an organic molecule + reduced [NADPH--hemoprotein reductase] + O2 = an alcohol + oxidized [NADPH--hemoprotein reductase] + H2O + H(+). It catalyses the reaction 17beta-estradiol + reduced [NADPH--hemoprotein reductase] + O2 = 2-hydroxy-17beta-estradiol + oxidized [NADPH--hemoprotein reductase] + H2O + H(+). The enzyme catalyses 17beta-estradiol + reduced [NADPH--hemoprotein reductase] + O2 = 4-hydroxy-17beta-estradiol + oxidized [NADPH--hemoprotein reductase] + H2O + H(+). It carries out the reaction estrone + reduced [NADPH--hemoprotein reductase] + O2 = 2-hydroxyestrone + oxidized [NADPH--hemoprotein reductase] + H2O + H(+). The catalysed reaction is estrone + reduced [NADPH--hemoprotein reductase] + O2 = 4-hydroxyestrone + oxidized [NADPH--hemoprotein reductase] + H2O + H(+). It catalyses the reaction cholesterol + reduced [NADPH--hemoprotein reductase] + O2 = 25-hydroxycholesterol + oxidized [NADPH--hemoprotein reductase] + H2O + H(+). The enzyme catalyses all-trans-retinol + reduced [NADPH--hemoprotein reductase] + O2 = all-trans-retinal + oxidized [NADPH--hemoprotein reductase] + 2 H2O + H(+). It carries out the reaction all-trans-retinal + reduced [NADPH--hemoprotein reductase] + O2 = all-trans-retinoate + oxidized [NADPH--hemoprotein reductase] + H2O + 2 H(+). The catalysed reaction is (5Z,8Z,11Z,14Z)-eicosatetraenoate + reduced [NADPH--hemoprotein reductase] + O2 = (14R,15S)-epoxy-(5Z,8Z,11Z)-eicosatrienoate + oxidized [NADPH--hemoprotein reductase] + H2O + H(+). It catalyses the reaction (5Z,8Z,11Z,14Z)-eicosatetraenoate + reduced [NADPH--hemoprotein reductase] + O2 = (14S,15R)-epoxy-(5Z,8Z,11Z)-eicosatrienoate + oxidized [NADPH--hemoprotein reductase] + H2O + H(+). The enzyme catalyses (5Z,8Z,11Z,14Z,17Z)-eicosapentaenoate + reduced [NADPH--hemoprotein reductase] + O2 = (17R,18S)-epoxy-(5Z,8Z,11Z,14Z)-eicosatetraenoate + oxidized [NADPH--hemoprotein reductase] + H2O + H(+). It carries out the reaction (4Z,7Z,10Z,13Z,16Z,19Z)-docosahexaenoate + reduced [NADPH--hemoprotein reductase] + O2 = (19R,20S)-epoxy-(4Z,7Z,10Z,13Z,16Z)-docosapentaenoate + oxidized [NADPH--hemoprotein reductase] + H2O + H(+). The catalysed reaction is (5S)-hydroperoxy-(6E,8Z,11Z,14Z)-eicosatetraenoate = 5-oxo-(6E,8Z,11Z,14Z)-eicosatetraenoate + H2O. It catalyses the reaction (12S)-hydroperoxy-(5Z,8Z,10E,14Z)-eicosatetraenoate = 12-oxo-(5Z,8Z,10E,14Z)-eicosatetraenoate + H2O. The enzyme catalyses (15S)-hydroperoxy-(5Z,8Z,11Z,13E)-eicosatetraenoate = 15-oxo-(5Z,8Z,11Z,13E)-eicosatetraenoate + H2O. It carries out the reaction (13S)-hydroperoxy-(9Z,11E)-octadecadienoate = 13-oxo-(9Z,11E)-octadecadienoate + H2O. The catalysed reaction is (5Z,8Z,11Z,14Z)-eicosatetraenoate + reduced [NADPH--hemoprotein reductase] + O2 = 13-hydroxy-(5Z,8Z,11Z,14Z)-eicosatetraenoate + oxidized [NADPH--hemoprotein reductase] + H2O + H(+). It catalyses the reaction (5Z,8Z,11Z,14Z)-eicosatetraenoate + reduced [NADPH--hemoprotein reductase] + O2 = 19-hydroxy-(5Z,8Z,11Z,14Z)-eicosatetraenoate + oxidized [NADPH--hemoprotein reductase] + H2O + H(+). The enzyme catalyses (9Z,12Z)-octadecadienoate + reduced [NADPH--hemoprotein reductase] + O2 = 11-hydroxy-(9Z,12Z)-octadecadienoate + oxidized [NADPH--hemoprotein reductase] + H2O + H(+). Its pathway is cofactor metabolism; retinol metabolism. The protein operates within steroid metabolism; cholesterol metabolism. It participates in lipid metabolism; arachidonate metabolism. A cytochrome P450 monooxygenase involved in the metabolism of various endogenous substrates, including fatty acids, steroid hormones and vitamins. Mechanistically, uses molecular oxygen inserting one oxygen atom into a substrate, and reducing the second into a water molecule, with two electrons provided by NADPH via cytochrome P450 reductase (NADPH--hemoprotein reductase). Catalyzes the hydroxylation of carbon-hydrogen bonds. Exhibits high catalytic activity for the formation of hydroxyestrogens from estrone (E1) and 17beta-estradiol (E2), namely 2-hydroxy E1 and E2. Metabolizes cholesterol toward 25-hydroxycholesterol, a physiological regulator of cellular cholesterol homeostasis. May act as a major enzyme for all-trans retinoic acid biosynthesis in the liver. Catalyzes two successive oxidative transformation of all-trans retinol to all-trans retinal and then to the active form all-trans retinoic acid. Primarily catalyzes stereoselective epoxidation of the last double bond of polyunsaturated fatty acids (PUFA), displaying a strong preference for the (R,S) stereoisomer. Catalyzes bisallylic hydroxylation and omega-1 hydroxylation of PUFA. May also participate in eicosanoids metabolism by converting hydroperoxide species into oxo metabolites (lipoxygenase-like reaction, NADPH-independent). Plays a role in the oxidative metabolism of xenobiotics. Catalyzes the N-hydroxylation of heterocyclic amines and the O-deethylation of phenacetin. Metabolizes caffeine via N3-demethylation. In Pongo abelii (Sumatran orangutan), this protein is Cytochrome P450 1A2 (CYP1A2).